A 66-amino-acid chain; its full sequence is Large ribosomal subunit protein bL31 (66 aa).

Zn(2+) is bound by residues C16, C18, C36, and C39.

It belongs to the bacterial ribosomal protein bL31 family. Type A subfamily. In terms of assembly, part of the 50S ribosomal subunit. Requires Zn(2+) as cofactor.

Binds the 23S rRNA. This chain is Large ribosomal subunit protein bL31, found in Nautilia profundicola (strain ATCC BAA-1463 / DSM 18972 / AmH).